A 127-amino-acid polypeptide reads, in one-letter code: Large ribosomal subunit protein uL22 (127 aa).

It belongs to the universal ribosomal protein uL22 family. In terms of assembly, part of the 50S ribosomal subunit.

Functionally, this protein binds specifically to 23S rRNA; its binding is stimulated by other ribosomal proteins, e.g. L4, L17, and L20. It is important during the early stages of 50S assembly. It makes multiple contacts with different domains of the 23S rRNA in the assembled 50S subunit and ribosome. The globular domain of the protein is located near the polypeptide exit tunnel on the outside of the subunit, while an extended beta-hairpin is found that lines the wall of the exit tunnel in the center of the 70S ribosome. The sequence is that of Large ribosomal subunit protein uL22 from Methylorubrum extorquens (strain CM4 / NCIMB 13688) (Methylobacterium extorquens).